The chain runs to 160 residues: Transcription elongation factor GreA (160 aa).

The stretch at 49 to 77 (SEYQSAKDEQAFVEGRIQTLKNMIDNAEI) forms a coiled coil.

It belongs to the GreA/GreB family.

Its function is as follows. Necessary for efficient RNA polymerase transcription elongation past template-encoded arresting sites. The arresting sites in DNA have the property of trapping a certain fraction of elongating RNA polymerases that pass through, resulting in locked ternary complexes. Cleavage of the nascent transcript by cleavage factors such as GreA or GreB allows the resumption of elongation from the new 3'terminus. GreA releases sequences of 2 to 3 nucleotides. This is Transcription elongation factor GreA from Leuconostoc mesenteroides subsp. mesenteroides (strain ATCC 8293 / DSM 20343 / BCRC 11652 / CCM 1803 / JCM 6124 / NCDO 523 / NBRC 100496 / NCIMB 8023 / NCTC 12954 / NRRL B-1118 / 37Y).